Here is a 529-residue protein sequence, read N- to C-terminus: MIAVFSLIAAALAVGSLVLLPVVLRGGCLLVVTIVWLWQILHFWHWRRLGVPFVPAAPFVGNVWNLLRGACCFGDQFRELYESKEAAGRAFVGIDVLHNHALLLRDPALIKRIMVEDFAQFSSRFETTDPTCDTMGSQNLFFSKYETWRETHKIFAPFFAAGKVRNMYGLLENIGQKLEEHMEQKLSGRDSMELEVKQLCALFTTDIIASLAFGIEAHSLQNPEAEFRRMCIEVNDPRPKRLLHLFTMFFFPRLSHRVGTHLYSEEYERFMRKSMDYVLSQRAESGENRHDLIDIFLQLKRTEPAESIIHRPDFFAAQAAFLLLAGFDTSSSTITFALYELAKNTTIQDRLRTELRAALQSSQDRQLSCDTVTGLVYLRQVVDEVLRLYPPTAFLDRCCNSRTGYDLSPWNGGSPFKLRAGTPVYISVLGIHRDAQYWPNPEVFDPERFSAEQRQQHHPMTYLPFGAGPRGCIGTLLGQLEIKVGLLHILNHFRVEVCERTLPEMRFDPKAFVLTAHNGTYLRFVKNSL.

Cys-472 provides a ligand contact to heme.

Belongs to the cytochrome P450 family. Heme serves as cofactor.

The protein localises to the endoplasmic reticulum membrane. Its subcellular location is the microsome membrane. Functionally, may be involved in the metabolism of insect hormones and in the breakdown of synthetic insecticides. The sequence is that of Probable cytochrome P450 6t1 (Cyp6t1) from Drosophila melanogaster (Fruit fly).